The sequence spans 450 residues: MSLRLPSGSRRASPRPTTGSLRLSSGGASFGAGNACSMPGIGSSFSCAFGGSSSGGNALGGNPCAGFTVNEGGLLSGNEKVTMQNLNDRLASYLENVRALEEANADLEQKIKGWYEKFGPGSCRGLDHDYSRYFPIIEDLKNQIIASTTSNANAVLQIDNARLTADDFRLKYENELALHQSVESDVNGLRRVLDEITLCRTDLEIQYETLSEELTYLKKNHKEEMQVLQCAAGGNVNVEMNAAPGVDLTVLLNNMRAEYEALAEQNRRDAEAWFNEKSASLQQQITEDVGATTSARNELTEMKRNLQTLEIELQSLLATKHSLECSLTETEGNYCAQLAQIQAQIGALEEQLHQVRTETEGQKLEYEQLLDIKVHLEKEIETYCLLIGGDDGACKSGGYKSKDYGAGNVGNQMKDPVKAIVVKKVLEEVDQRSKILTPRLHSLEEKSQSN.

Positions 1-25 (MSLRLPSGSRRASPRPTTGSLRLSS) are disordered. Residues 1-78 (MSLRLPSGSR…VNEGGLLSGN (78 aa)) are head. The tract at residues 79 to 114 (EKVTMQNLNDRLASYLENVRALEEANADLEQKIKGW) is coil 1A. One can recognise an IF rod domain in the interval 79–394 (EKVTMQNLND…LLIGGDDGAC (316 aa)). The segment at 115-136 (YEKFGPGSCRGLDHDYSRYFPI) is linker 1. Positions 137–228 (IEDLKNQIIA…KNHKEEMQVL (92 aa)) are coil 1B. Residues 229 to 251 (QCAAGGNVNVEMNAAPGVDLTVL) form a linker 12 region. A coil 2 region spans residues 252-390 (LNNMRAEYEA…ETYCLLIGGD (139 aa)). The segment at 391-450 (DGACKSGGYKSKDYGAGNVGNQMKDPVKAIVVKKVLEEVDQRSKILTPRLHSLEEKSQSN) is tail. At serine 442 the chain carries Phosphoserine.

This sequence belongs to the intermediate filament family. Heterodimer of a type I and a type II keratin. Heterodimer with type II keratin KRT5 leading to the formation of keratin intermediate filament (KIF) network. Interacts with KRT6A to form filaments.

It is found in the cytoplasm. Its function is as follows. Essential for the proper assembly of type I and type II keratin protein complexes and formation of keratin intermediate filaments in the inner root sheath (irs). Plays a role in the cytoskeleton organization. The sequence is that of Keratin, type I cytoskeletal 25 from Bos taurus (Bovine).